The chain runs to 90 residues: Alpha-latrotoxin associated low molecular weight protein (90 aa).

Residues 1–18 (MNKLFFVVFLCLIISVLA) form the signal peptide.

Belongs to the arthropod CHH/MIH/GIH/VIH hormone family. Expressed by the venom gland.

It localises to the secreted. Its function is as follows. May increase the toxicity of alpha-latrotoxin and/or other venom components. Is non-toxic to mice and to the cockroach Periplaneta americana. The chain is Alpha-latrotoxin associated low molecular weight protein from Latrodectus geometricus (Brown widow spider).